A 660-amino-acid polypeptide reads, in one-letter code: DNA mismatch repair protein MutL (660 aa).

Residues 414-433 (SSVKHASRPQNTFTETDHPN) form a disordered region.

The protein belongs to the DNA mismatch repair MutL/HexB family.

This protein is involved in the repair of mismatches in DNA. It is required for dam-dependent methyl-directed DNA mismatch repair. May act as a 'molecular matchmaker', a protein that promotes the formation of a stable complex between two or more DNA-binding proteins in an ATP-dependent manner without itself being part of a final effector complex. This is DNA mismatch repair protein MutL from Streptococcus pyogenes serotype M6 (strain ATCC BAA-946 / MGAS10394).